We begin with the raw amino-acid sequence, 251 residues long: tRNA (guanine-N(1)-)-methyltransferase (251 aa).

S-adenosyl-L-methionine contacts are provided by residues Gly113 and 133-138 (MGDYVL).

This sequence belongs to the RNA methyltransferase TrmD family. In terms of assembly, homodimer.

It localises to the cytoplasm. The catalysed reaction is guanosine(37) in tRNA + S-adenosyl-L-methionine = N(1)-methylguanosine(37) in tRNA + S-adenosyl-L-homocysteine + H(+). In terms of biological role, specifically methylates guanosine-37 in various tRNAs. This chain is tRNA (guanine-N(1)-)-methyltransferase, found in Sodalis glossinidius (strain morsitans).